The chain runs to 458 residues: Argininosuccinate lyase (458 aa).

The protein belongs to the lyase 1 family. Argininosuccinate lyase subfamily.

It localises to the cytoplasm. It carries out the reaction 2-(N(omega)-L-arginino)succinate = fumarate + L-arginine. It participates in amino-acid biosynthesis; L-arginine biosynthesis; L-arginine from L-ornithine and carbamoyl phosphate: step 3/3. This Lachnospira eligens (strain ATCC 27750 / DSM 3376 / VPI C15-48 / C15-B4) (Eubacterium eligens) protein is Argininosuccinate lyase.